Consider the following 373-residue polypeptide: tRNA-specific 2-thiouridylase MnmA (373 aa).

Residues 12–19 (GMSGGVDS) and M38 contribute to the ATP site. The tract at residues 98-100 (NPD) is interaction with target base in tRNA. Catalysis depends on C103, which acts as the Nucleophile. Cysteines 103 and 200 form a disulfide. G127 is an ATP binding site. An interaction with tRNA region spans residues 150-152 (KDQ). Residue C200 is the Cysteine persulfide intermediate of the active site. Residues 312-313 (RY) are interaction with tRNA.

Belongs to the MnmA/TRMU family.

The protein resides in the cytoplasm. It carries out the reaction S-sulfanyl-L-cysteinyl-[protein] + uridine(34) in tRNA + AH2 + ATP = 2-thiouridine(34) in tRNA + L-cysteinyl-[protein] + A + AMP + diphosphate + H(+). In terms of biological role, catalyzes the 2-thiolation of uridine at the wobble position (U34) of tRNA, leading to the formation of s(2)U34. The polypeptide is tRNA-specific 2-thiouridylase MnmA (Streptococcus pyogenes serotype M18 (strain MGAS8232)).